The chain runs to 1023 residues: Sodium/potassium-transporting ATPase subunit alpha-1 (1023 aa).

Positions 1–5 (MGKGV) are excised as a propeptide. Residues 1-11 (MGKGVGRDKYE) are compositionally biased toward basic and acidic residues. Residues 1–38 (MGKGVGRDKYEPAAVSEHGDKKGKKAKKERDMDELKKE) form a disordered region. Over 6 to 87 (GRDKYEPAAV…NALTPPPTTP (82 aa)) the chain is Cytoplasmic. The residue at position 9 (K9) is an N6-acetyllysine. A Phosphotyrosine modification is found at Y10. A Phosphoserine; by PKC modification is found at S16. K21 bears the N6-acetyllysine mark. Positions 28–38 (KERDMDELKKE) are enriched in basic and acidic residues. S40 and S47 each carry phosphoserine. Positions 82–84 (PPP) are phosphoinositide-3 kinase binding. A helical transmembrane segment spans residues 88–108 (EWVKFCRQLFGGFSMLLWIGA). The Extracellular segment spans residues 109-131 (ILCFLAYGILAATEEDFDNDNLY). A helical transmembrane segment spans residues 132 to 152 (LGVVLAAVVIITGCFSYYQEA). Topologically, residues 153-288 (KSSKIMESFK…GGQTPIAAEI (136 aa)) are cytoplasmic. The disordered stretch occupies residues 216 to 235 (SSLTGESEPQTRSPDFTNEN). At S228 the chain carries Phosphoserine. Y260 carries the post-translational modification Phosphotyrosine. A helical membrane pass occupies residues 289 to 308 (EHFIHIITGVAVFLGVSFFI). At 309-320 (LSLILEYTWLEA) the chain is on the extracellular side. The chain crosses the membrane as a helical span at residues 321 to 338 (VIFLIGIIVANVPEGLLA). At 339–772 (TVTVCLTLTA…EEGRLIFDNL (434 aa)) the chain is on the cytoplasmic side. D376 serves as the catalytic 4-aspartylphosphate intermediate. Residues S452 and S484 each carry the phosphoserine modification. K487 is an ATP binding site. Y542 carries the post-translational modification Phosphotyrosine. The tract at residues 596–717 (RAAVPDAVGK…QGAIVAVTGD (122 aa)) is mediates interaction with SCN7A. An N6-succinyllysine modification is found at K661. Phosphoserine occurs at positions 668 and 675. 2 residues coordinate Mg(2+): D717 and D721. The chain crosses the membrane as a helical span at residues 773–792 (KKSIAYTLTSNIPEITPFLI). Residues 793–802 (FIIANIPLPL) are Extracellular-facing. The helical transmembrane segment at 803 to 823 (GTVTILCIDLGTDMVPAISLA) threads the bilayer. Residues 824-843 (YEQAESDIMKRQPRNPKTDK) are Cytoplasmic-facing. The helical transmembrane segment at 844-866 (LVNERLISMAYGQIGMIQALGGF) threads the bilayer. Topologically, residues 867–918 (FTYFVILAENGFLPFHLLGIRVDWDDRWINDVEDSYGQQWTYEQRKIVEFTC) are extracellular. Residues 919–938 (HTAFFVSIVVVQWADLVICK) form a helical membrane-spanning segment. Over 939–951 (TRRNSVFQQGMKN) the chain is Cytoplasmic. S943 is subject to Phosphoserine; by PKA. A helical transmembrane segment spans residues 952 to 970 (KILIFGLFEETALAAFLSY). Residues 971–985 (CPGMGVALRMYPLKP) are Extracellular-facing. Residues 986–1006 (TWWFCAFPYSLLIFVYDEIRK) traverse the membrane as a helical segment. Topologically, residues 1007–1023 (LIIRRRPGGWVEKETYY) are cytoplasmic.

It belongs to the cation transport ATPase (P-type) (TC 3.A.3) family. Type IIC subfamily. The sodium/potassium-transporting ATPase is composed of a catalytic alpha subunit, an auxiliary non-catalytic beta subunit and an additional regulatory subunit. Interacts with regulatory subunit FXYD1. Interacts with regulatory subunit FXYD3. Interacts with SIK1. Interacts with SLC35G1 and STIM1. Interacts with CLN3; this interaction regulates the sodium/potassium-transporting ATPase complex localization at the plasma membrane. Interacts with SCN7A; activates ATP1A1 P-type sodium:potassium-exchanging transporter activity which indirectly signals to nearby neurons to regulate sodium homeostasis. Phosphorylation on Tyr-10 modulates pumping activity. Phosphorylation of Ser-943 by PKA modulates the response of ATP1A1 to PKC. Dephosphorylation by protein phosphatase 2A (PP2A) following increases in intracellular sodium, leading to increase catalytic activity. Expressed in endocardial endothelial cells.

It localises to the cell membrane. Its subcellular location is the basolateral cell membrane. The protein resides in the sarcolemma. The protein localises to the cell projection. It is found in the axon. It localises to the melanosome. It catalyses the reaction K(+)(out) + Na(+)(in) + ATP + H2O = K(+)(in) + Na(+)(out) + ADP + phosphate + H(+). In terms of biological role, this is the catalytic component of the active enzyme, which catalyzes the hydrolysis of ATP coupled with the exchange of sodium and potassium ions across the plasma membrane. This action creates the electrochemical gradient of sodium and potassium ions, providing the energy for active transport of various nutrients. Could also be part of an osmosensory signaling pathway that senses body-fluid sodium levels and controls salt intake behavior as well as voluntary water intake to regulate sodium homeostasis. The polypeptide is Sodium/potassium-transporting ATPase subunit alpha-1 (ATP1A1) (Oryctolagus cuniculus (Rabbit)).